Consider the following 290-residue polypeptide: Inositol-1-monophosphatase (290 aa).

Residues glutamate 83, aspartate 104, isoleucine 106, and aspartate 107 each coordinate Mg(2+). Glutamate 83 contacts substrate. Substrate is bound by residues 106 to 109 (IDGT), arginine 206, and aspartate 235. Aspartate 235 lines the Mg(2+) pocket.

It belongs to the inositol monophosphatase superfamily. Mg(2+) is required as a cofactor.

The catalysed reaction is a myo-inositol phosphate + H2O = myo-inositol + phosphate. The sequence is that of Inositol-1-monophosphatase (suhB) from Mycobacterium bovis (strain ATCC BAA-935 / AF2122/97).